Consider the following 104-residue polypeptide: uncharacterized protein (104 aa).

The disordered stretch occupies residues asparagine 51 to phenylalanine 70. Residues aspartate 57–phenylalanine 70 are compositionally biased toward basic and acidic residues.

The protein belongs to the protein-tyrosine phosphatase family.

This is an uncharacterized protein from Xanthomonas campestris pv. campestris (strain ATCC 33913 / DSM 3586 / NCPPB 528 / LMG 568 / P 25).